Here is a 194-residue protein sequence, read N- to C-terminus: Ribosome maturation factor RimM (194 aa).

Residues 113–194 (DGEYYWIDLI…RIVADWGLDY (82 aa)) form the PRC barrel domain.

Belongs to the RimM family. Binds ribosomal protein uS19.

It is found in the cytoplasm. Functionally, an accessory protein needed during the final step in the assembly of 30S ribosomal subunit, possibly for assembly of the head region. Essential for efficient processing of 16S rRNA. May be needed both before and after RbfA during the maturation of 16S rRNA. It has affinity for free ribosomal 30S subunits but not for 70S ribosomes. In Leptothrix cholodnii (strain ATCC 51168 / LMG 8142 / SP-6) (Leptothrix discophora (strain SP-6)), this protein is Ribosome maturation factor RimM.